The chain runs to 212 residues: Kynurenine formamidase (212 aa).

Tryptophan 18 contacts substrate. Histidine 48, histidine 52, and aspartate 54 together coordinate Zn(2+). The active-site Proton donor/acceptor is histidine 58. Residues histidine 160 and glutamate 172 each coordinate Zn(2+).

It belongs to the Cyclase 1 superfamily. KynB family. Homodimer. Zn(2+) serves as cofactor.

The catalysed reaction is N-formyl-L-kynurenine + H2O = L-kynurenine + formate + H(+). It participates in amino-acid degradation; L-tryptophan degradation via kynurenine pathway; L-kynurenine from L-tryptophan: step 2/2. In terms of biological role, catalyzes the hydrolysis of N-formyl-L-kynurenine to L-kynurenine, the second step in the kynurenine pathway of tryptophan degradation. This chain is Kynurenine formamidase, found in Paraburkholderia phytofirmans (strain DSM 17436 / LMG 22146 / PsJN) (Burkholderia phytofirmans).